A 379-amino-acid polypeptide reads, in one-letter code: 3-dehydroquinate synthase (379 aa).

Residues 67–72 (PGEKNK), 101–105 (GIVLD), 125–126 (TT), lysine 138, and lysine 147 each bind NAD(+). Zn(2+) is bound by residues glutamate 180, histidine 242, and histidine 258.

The protein belongs to the sugar phosphate cyclases superfamily. Dehydroquinate synthase family. The cofactor is NAD(+). Requires Co(2+) as cofactor. Zn(2+) is required as a cofactor.

It localises to the cytoplasm. The enzyme catalyses 7-phospho-2-dehydro-3-deoxy-D-arabino-heptonate = 3-dehydroquinate + phosphate. It functions in the pathway metabolic intermediate biosynthesis; chorismate biosynthesis; chorismate from D-erythrose 4-phosphate and phosphoenolpyruvate: step 2/7. In terms of biological role, catalyzes the conversion of 3-deoxy-D-arabino-heptulosonate 7-phosphate (DAHP) to dehydroquinate (DHQ). This Chlamydia felis (strain Fe/C-56) (Chlamydophila felis) protein is 3-dehydroquinate synthase.